A 595-amino-acid polypeptide reads, in one-letter code: Beta-lactamase-like protein ARB_00930 (595 aa).

The first 18 residues, 1 to 18, serve as a signal peptide directing secretion; that stretch reads MVVCFLWLLLPYAATTLS. N-linked (GlcNAc...) asparagine glycosylation is found at asparagine 70 and asparagine 102. The active-site Acyl-ester intermediate is serine 117. Asparagine 147, asparagine 156, and asparagine 195 each carry an N-linked (GlcNAc...) asparagine glycan. Tyrosine 235 acts as the Proton acceptor in catalysis. Residues asparagine 249, asparagine 461, and asparagine 473 are each glycosylated (N-linked (GlcNAc...) asparagine).

The protein belongs to the beta-lactamase family.

It localises to the secreted. The catalysed reaction is a beta-lactam + H2O = a substituted beta-amino acid. In Arthroderma benhamiae (strain ATCC MYA-4681 / CBS 112371) (Trichophyton mentagrophytes), this protein is Beta-lactamase-like protein ARB_00930.